Reading from the N-terminus, the 352-residue chain is Molybdenum import ATP-binding protein ModC (352 aa).

An ABC transporter domain is found at methionine 1–glutamate 229. ATP is bound at residue glycine 31 to threonine 38. The 64-residue stretch at glutamine 289–alanine 352 folds into the Mop domain.

The protein belongs to the ABC transporter superfamily. Molybdate importer (TC 3.A.1.8) family. As to quaternary structure, the complex is composed of two ATP-binding proteins (ModC), two transmembrane proteins (ModB) and a solute-binding protein (ModA).

It is found in the cell inner membrane. It catalyses the reaction molybdate(out) + ATP + H2O = molybdate(in) + ADP + phosphate + H(+). In terms of biological role, part of the ABC transporter complex ModABC involved in molybdenum import. Responsible for energy coupling to the transport system. In Escherichia coli O6:K15:H31 (strain 536 / UPEC), this protein is Molybdenum import ATP-binding protein ModC.